The following is a 1763-amino-acid chain: Non-reducing polyketide synthase PKS19 (1763 aa).

Residues 20 to 261 (GDQRNLFRKL…PMKKVQGMWH (242 aa)) form an N-terminal acylcarrier protein transacylase domain (SAT) region. A Ketosynthase family 3 (KS3) domain is found at 390-822 (SSKIAVVGMA…GGNTSIIIEE (433 aa)). Active-site for beta-ketoacyl synthase activity residues include cysteine 561, histidine 696, and histidine 740. The interval 922–1227 (FAFTGQGTFY…QRDTDNWLTL (306 aa)) is malonyl-CoA:ACP transacylase (MAT) domain. The segment at 1307 to 1439 (HRLISEQYTD…VFYEDPSSWL (133 aa)) is N-terminal hotdog fold. The PKS/mFAS DH domain maps to 1307–1609 (HRLISEQYTD…FLQWPRVMLN (303 aa)). The segment at 1334–1588 (GVVDGHAMNG…FVGDVYVLQG (255 aa)) is product template (PT) domain. Histidine 1339 serves as the catalytic Proton acceptor; for dehydratase activity. The segment at 1461 to 1609 (VTGKASKLTT…FLQWPRVMLN (149 aa)) is C-terminal hotdog fold. Aspartate 1522 (proton donor; for dehydratase activity) is an active-site residue. The interval 1619–1690 (AKPAAKVPGK…MEELPSPPAG (72 aa)) is disordered. A compositionally biased stretch (basic residues) spans 1635-1647 (PHFKPHHVSRHKP). The Carrier domain occupies 1689–1763 (AGMNDDMEKA…TIQDLKALLR (75 aa)). Serine 1726 carries the O-(pantetheine 4'-phosphoryl)serine modification.

Non-reducing polyketide synthase that mediates the biosynthesis of alternariol (AOH), a micotoxin that seems not to be involved in virulence and oxidative stress tolerance. PKS19 alone is sufficient for AOH synthesis which is initiated by priming with acetyl-CoA, followed by sequential condensations of 6 malonyl-CoA units. In Phaeosphaeria nodorum (strain SN15 / ATCC MYA-4574 / FGSC 10173) (Glume blotch fungus), this protein is Non-reducing polyketide synthase PKS19.